A 711-amino-acid chain; its full sequence is Triacylglycerol hydrolase DDHD2 (711 aa).

The segment at 1–24 (MSSVQSQQEQLSQSDPSPSPNSCS) is disordered. The region spanning 30 to 112 (DMDAGSLYEP…WDELASEVRR (83 aa)) is the WWE domain. Ser351 acts as the Nucleophile in catalysis. The region spanning 385 to 448 (GDTPTLEEDL…NYFSTRKNSM (64 aa)) is the SAM domain. Ser447 carries the post-translational modification Phosphoserine. 2 disordered regions span residues 449 to 470 (GIKRPAPQPASGANIPKESEFC) and 609 to 638 (LQASETPEETEAEPESTSEKPSDVNTEETS). Positions 495–700 (LIYKPEIFFA…VLLVLKEIYQ (206 aa)) constitute a DDHD domain. Acidic residues predominate over residues 614-624 (TPEETEAEPES).

It belongs to the PA-PLA1 family. Forms homooligomers and, to a much smaller extent, heterooligomers with DDHD1. In terms of tissue distribution, widely expressed (at protein level).

It localises to the cytoplasm. The protein resides in the cytosol. It is found in the endoplasmic reticulum-Golgi intermediate compartment. The protein localises to the golgi apparatus. Its subcellular location is the cis-Golgi network. It carries out the reaction a triacylglycerol + H2O = a diacylglycerol + a fatty acid + H(+). The catalysed reaction is a diacylglycerol + H2O = a monoacylglycerol + a fatty acid + H(+). It catalyses the reaction a 1,3-diacylglycerol + H2O = a 1-acylglycerol + a fatty acid + H(+). The enzyme catalyses a 1-acylglycerol + H2O = glycerol + a fatty acid + H(+). It carries out the reaction 1,2,3-tri-(9Z-octadecenoyl)-glycerol + H2O = di-(9Z)-octadecenoylglycerol + (9Z)-octadecenoate + H(+). The catalysed reaction is di-(9Z)-octadecenoylglycerol + H2O = (9Z-octadecenoyl)-glycerol + (9Z)-octadecenoate + H(+). It catalyses the reaction 1,3-di-(9Z-octadecenoyl)-glycerol + H2O = 1-(9Z-octadecenoyl)-glycerol + (9Z)-octadecenoate + H(+). The enzyme catalyses trihexadecanoylglycerol + H2O = dihexadecanoylglycerol + hexadecanoate + H(+). It carries out the reaction 1,2-di-(9Z-octadecenoyl)-sn-glycero-3-phosphocholine + H2O = (9Z-octadecenoyl)-sn-glycero-3-phosphocholine + (9Z)-octadecenoate + H(+). The catalysed reaction is 1-(9Z-octadecenoyl)-glycerol + H2O = glycerol + (9Z)-octadecenoate + H(+). It catalyses the reaction 1,2-di-(9Z-octadecenoyl)-sn-glycero-3-phosphate + H2O = 2-(9Z-octadecenoyl)-sn-glycero-3-phosphate + (9Z)-octadecenoate + H(+). The enzyme catalyses 1-hexadecanoyl-2-(9Z-octadecenoyl)-sn-glycero-3-phosphate + H2O = 2-(9Z-octadecenoyl)-sn-glycero-3-phosphate + hexadecanoate + H(+). It carries out the reaction 1-hexadecanoyl-2-(9Z-octadecenoyl)-sn-glycero-3-phosphoethanolamine + H2O = 2-(9Z-octadecenoyl)-sn-glycero-3-phosphoethanolamine + hexadecanoate + H(+). The catalysed reaction is 1-hexadecanoyl-2-(9Z-octadecenoyl)-sn-glycero-3-phospho-L-serine + H2O = 2-(9Z-octadecenoyl)-sn-glycero-3-phospho-L-serine + hexadecanoate + H(+). It catalyses the reaction 1-hexadecanoyl-2-(9Z-octadecenoyl)-sn-glycero-3-phosphocholine + H2O = 2-(9Z-octadecenoyl)-sn-glycero-3-phosphocholine + hexadecanoate + H(+). Diacylglycerol (DAG) and triacylglycerol (TAG) lipase required for proper lipid homeostasis in the central nervous system. It cooperates with PNPLA2/ATGL in neuronal TAG catabolism and hydrolyzes sn-1,3 DAG downstream of PNPLA2/ATGL. In vitro, it also acts as a phospholipase that hydrolyzes preferentially phosphatidic acids, including 1,2-dioleoyl-sn-phosphatidic acid, phosphatidylcholine and phosphatidylethanolamine. Specifically binds to phosphatidylinositol 3-phosphate (PI(3)P), phosphatidylinositol 4-phosphate (PI(4)P), phosphatidylinositol 5-phosphate (PI(5)P) and possibly phosphatidylinositol 4,5-bisphosphate (PI(4,5)P2). May be involved in the maintenance of the endoplasmic reticulum and/or Golgi structures. May regulate the transport between Golgi apparatus and plasma membrane. The polypeptide is Triacylglycerol hydrolase DDHD2 (Homo sapiens (Human)).